Consider the following 198-residue polypeptide: Recombination protein RecR (198 aa).

Residues 57 to 72 form a C4-type zinc finger; that stretch reads CSICGNLTDQDPCAIC. The Toprim domain maps to 80–175; it reads STILIVEDSR…KVTRLARGLA (96 aa).

It belongs to the RecR family.

Its function is as follows. May play a role in DNA repair. It seems to be involved in an RecBC-independent recombinational process of DNA repair. It may act with RecF and RecO. This Streptococcus suis (strain 05ZYH33) protein is Recombination protein RecR.